The chain runs to 155 residues: SsrA-binding protein (155 aa).

Belongs to the SmpB family.

The protein localises to the cytoplasm. Its function is as follows. Required for rescue of stalled ribosomes mediated by trans-translation. Binds to transfer-messenger RNA (tmRNA), required for stable association of tmRNA with ribosomes. tmRNA and SmpB together mimic tRNA shape, replacing the anticodon stem-loop with SmpB. tmRNA is encoded by the ssrA gene; the 2 termini fold to resemble tRNA(Ala) and it encodes a 'tag peptide', a short internal open reading frame. During trans-translation Ala-aminoacylated tmRNA acts like a tRNA, entering the A-site of stalled ribosomes, displacing the stalled mRNA. The ribosome then switches to translate the ORF on the tmRNA; the nascent peptide is terminated with the 'tag peptide' encoded by the tmRNA and targeted for degradation. The ribosome is freed to recommence translation, which seems to be the essential function of trans-translation. In Geobacillus kaustophilus (strain HTA426), this protein is SsrA-binding protein.